Consider the following 908-residue polypeptide: Mechanosensitive ion channel protein 8 (908 aa).

Positions 1-25 (MDFRNSFKSHSSYKQIRSPGDQSEP) are enriched in polar residues. Disordered regions lie at residues 1 to 88 (MDFR…HTAV), 148 to 172 (DQENDDVSHQTMPTPTSTARTSFDA), 190 to 221 (VAGSVPSSSSHSSSSSSATMRTNQDQPQLQEE), and 242 to 265 (VKTRSRLQDPPREEETPYSGWRSG). The span at 31-70 (PILHDHHPDHSGMVVDDQKPDSTRSSLDDGRNAPVERDAS) shows a compositional bias: basic and acidic residues. Composition is skewed to polar residues over residues 75 to 85 (QDNTTGTSTDH) and 156 to 171 (HQTMPTPTSTARTSFD). The span at 196–206 (SSSSHSSSSSS) shows a compositional bias: low complexity. Polar residues predominate over residues 207–218 (ATMRTNQDQPQL). The segment covering 247 to 256 (RLQDPPREEE) has biased composition (basic and acidic residues). The next 6 helical transmembrane spans lie at 298–318 (AITLLQWLSLVAIIAALACSL), 341–361 (LVLICGRLVSGWGIRIVVFFI), 381–401 (AVQNCLWLGLVLLAWHFLFDK), 411–431 (FLPYVTKILVCFLLSTILWLI), 673–693 (MINIVTAIVIVVIWLVLLEIA), and 709–729 (AFIFGNTVKTVFESIIFLFIV).

It belongs to the MscS (TC 1.A.23) family. Expressed in tricellular and mature pollen, and in germinating tube. Not detected in leaves or roots.

The protein resides in the cell membrane. Its subcellular location is the endomembrane system. With respect to regulation, not regulated by MgCl(2), ruthenium red or tetramethylammonium-Cl. Functionally, mechanosensitive channel that opens in response to stretch forces in the membrane lipid bilayer. Exhibits a 6.3-fold preference for chloride over sodium. Regulates osmotic forces during pollen hydration and germination. The protein is Mechanosensitive ion channel protein 8 of Arabidopsis thaliana (Mouse-ear cress).